The chain runs to 788 residues: Xylulose-5-phosphate phosphoketolase (788 aa).

It belongs to the XFP family. As to quaternary structure, homohexamer. The cofactor is thiamine diphosphate.

It catalyses the reaction D-xylulose 5-phosphate + phosphate = acetyl phosphate + D-glyceraldehyde 3-phosphate + H2O. The protein is Xylulose-5-phosphate phosphoketolase (xpkA) of Lactiplantibacillus pentosus (Lactobacillus pentosus).